Reading from the N-terminus, the 180-residue chain is Large ribosomal subunit protein uL5 (180 aa).

The protein belongs to the universal ribosomal protein uL5 family. Part of the 50S ribosomal subunit; part of the 5S rRNA/L5/L18/L25 subcomplex. Contacts the 5S rRNA and the P site tRNA. Forms a bridge to the 30S subunit in the 70S ribosome.

In terms of biological role, this is one of the proteins that bind and probably mediate the attachment of the 5S RNA into the large ribosomal subunit, where it forms part of the central protuberance. In the 70S ribosome it contacts protein S13 of the 30S subunit (bridge B1b), connecting the 2 subunits; this bridge is implicated in subunit movement. Contacts the P site tRNA; the 5S rRNA and some of its associated proteins might help stabilize positioning of ribosome-bound tRNAs. The polypeptide is Large ribosomal subunit protein uL5 (Stenotrophomonas maltophilia (strain R551-3)).